A 517-amino-acid chain; its full sequence is Putative thymidine phosphorylase (517 aa).

Belongs to the thymidine/pyrimidine-nucleoside phosphorylase family. Type 2 subfamily.

The enzyme catalyses thymidine + phosphate = 2-deoxy-alpha-D-ribose 1-phosphate + thymine. This Legionella pneumophila subsp. pneumophila (strain Philadelphia 1 / ATCC 33152 / DSM 7513) protein is Putative thymidine phosphorylase.